The sequence spans 291 residues: Exosome complex component RRP42 (291 aa).

The residue at position 2 (alanine 2) is an N-acetylalanine. Position 116 is an N6-acetyllysine (lysine 116). Serine 177 carries the phosphoserine modification.

The protein belongs to the RNase PH family. As to quaternary structure, component of the RNA exosome core complex (Exo-9), composed of EXOSC1, EXOSC2, EXOSC3, EXOSC4, EXOSC5, EXOSC6, EXOSC7, EXOSC8 and EXOSC9; within the complex interacts with EXOSC2 and EXOSC4. The catalytically inactive RNA exosome core complex (Exo-9) associates with the catalytic subunit EXOSC10/RRP6. Exo-9 may associate with DIS3 to form the nucleolar exosome complex, or DIS3L to form the cytoplasmic exosome complex. Exo-9 is formed by a hexameric base ring consisting of the heterodimers EXOSC4-EXOSC9, EXOSC5-EXOSC8 and EXOSC6-EXOSC7, and a cap ring consisting of EXOSC1, EXOSC2 and EXOSC3. The RNA exosome complex associates with cofactors C1D/RRP47, MPHOSPH6/MPP6 and MTREX/MTR4. Interacts with ZC3HAV1. Interacts with DIS3; the interaction is direct.

Its subcellular location is the nucleus. The protein resides in the nucleolus. It is found in the cytoplasm. In terms of biological role, non-catalytic component of the RNA exosome complex which has 3'-&gt;5' exoribonuclease activity and participates in a multitude of cellular RNA processing and degradation events. In the nucleus, the RNA exosome complex is involved in proper maturation of stable RNA species such as rRNA, snRNA and snoRNA, in the elimination of RNA processing by-products and non-coding 'pervasive' transcripts, such as antisense RNA species and promoter-upstream transcripts (PROMPTs), and of mRNAs with processing defects, thereby limiting or excluding their export to the cytoplasm. The RNA exosome may be involved in Ig class switch recombination (CSR) and/or Ig variable region somatic hypermutation (SHM) by targeting AICDA deamination activity to transcribed dsDNA substrates. In the cytoplasm, the RNA exosome complex is involved in general mRNA turnover and specifically degrades inherently unstable mRNAs containing AU-rich elements (AREs) within their 3' untranslated regions, and in RNA surveillance pathways, preventing translation of aberrant mRNAs. It seems to be involved in degradation of histone mRNA. The catalytic inactive RNA exosome core complex of 9 subunits (Exo-9) is proposed to play a pivotal role in the binding and presentation of RNA for ribonucleolysis, and to serve as a scaffold for the association with catalytic subunits and accessory proteins or complexes. This is Exosome complex component RRP42 (EXOSC7) from Homo sapiens (Human).